Consider the following 129-residue polypeptide: MAFITEIANEAQWKTEVLETPGTLQVVEVFQSWCGPCKAVQSTFKKLYFDLNDRPLKFYSVSSERLSSLKEYVGKCKPIFLFFKDGKQVEKIEGVKAPQLNRIVTELSGKNPPPAAPAAAPAAPAAEAS.

Positions 2 to 109 (AFITEIANEA…LNRIVTELSG (108 aa)) constitute a Thioredoxin domain. C34 and C37 are joined by a disulfide. The tract at residues 107–129 (LSGKNPPPAAPAAAPAAPAAEAS) is disordered. Low complexity predominate over residues 117-129 (PAAAPAAPAAEAS).

As to quaternary structure, consists of at least 3 heavy chains (alpha, beta and gamma), 2 intermediate chains and 8 light chains.

The protein resides in the cell projection. It localises to the cilium. The protein localises to the flagellum. It is found in the cytoplasm. Its subcellular location is the cytoskeleton. The protein resides in the flagellum axoneme. In terms of biological role, may be involved in regulating the redox state of functionally important thiol groups within dynein. In Chlamydomonas reinhardtii (Chlamydomonas smithii), this protein is Dynein 14 kDa light chain, flagellar outer arm.